A 200-amino-acid chain; its full sequence is GTP cyclohydrolase-2 (200 aa).

50–54 (RVHSE) provides a ligand contact to GTP. Zn(2+)-binding residues include cysteine 55, cysteine 66, and cysteine 68. GTP contacts are provided by residues glutamine 71, 93-95 (EGR), and threonine 115. Aspartate 127 (proton acceptor) is an active-site residue. Arginine 129 serves as the catalytic Nucleophile. Positions 150 and 155 each coordinate GTP.

It belongs to the GTP cyclohydrolase II family. It depends on Zn(2+) as a cofactor.

It catalyses the reaction GTP + 4 H2O = 2,5-diamino-6-hydroxy-4-(5-phosphoribosylamino)-pyrimidine + formate + 2 phosphate + 3 H(+). The protein operates within cofactor biosynthesis; riboflavin biosynthesis; 5-amino-6-(D-ribitylamino)uracil from GTP: step 1/4. In terms of biological role, catalyzes the conversion of GTP to 2,5-diamino-6-ribosylamino-4(3H)-pyrimidinone 5'-phosphate (DARP), formate and pyrophosphate. In Acinetobacter baumannii (strain SDF), this protein is GTP cyclohydrolase-2.